The following is a 434-amino-acid chain: Methylenetetrahydrofolate--tRNA-(uracil-5-)-methyltransferase TrmFO (434 aa).

Position 9–14 (9–14 (GAGLAG)) interacts with FAD.

Belongs to the MnmG family. TrmFO subfamily. The cofactor is FAD.

The protein resides in the cytoplasm. The catalysed reaction is uridine(54) in tRNA + (6R)-5,10-methylene-5,6,7,8-tetrahydrofolate + NADH + H(+) = 5-methyluridine(54) in tRNA + (6S)-5,6,7,8-tetrahydrofolate + NAD(+). It catalyses the reaction uridine(54) in tRNA + (6R)-5,10-methylene-5,6,7,8-tetrahydrofolate + NADPH + H(+) = 5-methyluridine(54) in tRNA + (6S)-5,6,7,8-tetrahydrofolate + NADP(+). Catalyzes the folate-dependent formation of 5-methyl-uridine at position 54 (M-5-U54) in all tRNAs. This Listeria monocytogenes serovar 1/2a (strain ATCC BAA-679 / EGD-e) protein is Methylenetetrahydrofolate--tRNA-(uracil-5-)-methyltransferase TrmFO.